The following is a 255-amino-acid chain: 5'-nucleotidase SurE (255 aa).

A divalent metal cation-binding residues include D8, D9, S39, and N95.

Belongs to the SurE nucleotidase family. A divalent metal cation is required as a cofactor.

Its subcellular location is the cytoplasm. The enzyme catalyses a ribonucleoside 5'-phosphate + H2O = a ribonucleoside + phosphate. Nucleotidase that shows phosphatase activity on nucleoside 5'-monophosphates. The sequence is that of 5'-nucleotidase SurE from Thermosipho africanus (strain TCF52B).